A 360-amino-acid polypeptide reads, in one-letter code: N-acetylmuramoyl-L-alanine amidase CwlL (360 aa).

Positions 1–39 (MVKVVKNFVKVNQYTRPGLKLAGVKGIVMHYTATPGASA) are cleaved as a signal peptide. In terms of domain architecture, N-acetylmuramoyl-L-alanine amidase spans 40–154 (LNERDYFNGT…DVTNKICPAP (115 aa)). 4 tandem repeats follow at residues 166–191 (RKKV…SSKS), 196–259 (LKKG…EKAL), 265–289 (KKKK…KVKS), and 291–355 (LMKG…KAKL). 2 X approximate repeats stretches follow at residues 166-289 (RKKV…KVKS) and 196-355 (LKKG…KAKL).

Belongs to the N-acetylmuramoyl-L-alanine amidase 2 family.

The protein localises to the secreted. It catalyses the reaction Hydrolyzes the link between N-acetylmuramoyl residues and L-amino acid residues in certain cell-wall glycopeptides.. The sequence is that of N-acetylmuramoyl-L-alanine amidase CwlL (cwlL) from Bacillus licheniformis.